The primary structure comprises 309 residues: MRIFFASSDVIALEVLKKISDQYDVVGVLTAPDKPSGRGLSLKVNDIKREALSRKITVLQPVVLDADVINLVKSLEPELMLVFSYGKIFKQEFLDIFPVGCINIHPSLLPKYRGPSPIQTAILNGDSISGITVQKMTLEMDSGNILAQSQFEIKSFNTSVDIFEYVSLNSFDLVIEALNKLLKGDIGIVQDKNNATYCSFLGKEHRTIDFKLSAFDIKNKINAYNPWPLARARLDNNEIIFHRADFISTNDYDDQVIGKIIAFDPSKGLLVKTGDGILVVLELQRIGKKVLDCVSFYHGNRDLIGKVFS.

Residue 107 to 110 (SLLP) participates in (6S)-5,6,7,8-tetrahydrofolate binding.

The protein belongs to the Fmt family.

The enzyme catalyses L-methionyl-tRNA(fMet) + (6R)-10-formyltetrahydrofolate = N-formyl-L-methionyl-tRNA(fMet) + (6S)-5,6,7,8-tetrahydrofolate + H(+). Functionally, attaches a formyl group to the free amino group of methionyl-tRNA(fMet). The formyl group appears to play a dual role in the initiator identity of N-formylmethionyl-tRNA by promoting its recognition by IF2 and preventing the misappropriation of this tRNA by the elongation apparatus. In Borrelia duttonii (strain Ly), this protein is Methionyl-tRNA formyltransferase.